The following is a 103-amino-acid chain: Large ribosomal subunit protein bL21 (103 aa).

It belongs to the bacterial ribosomal protein bL21 family. Part of the 50S ribosomal subunit. Contacts protein L20.

This protein binds to 23S rRNA in the presence of protein L20. The sequence is that of Large ribosomal subunit protein bL21 from Lactobacillus acidophilus (strain ATCC 700396 / NCK56 / N2 / NCFM).